The following is an 828-amino-acid chain: Beta-galactosidase 13 (828 aa).

An N-terminal signal peptide occupies residues 1–23; it reads MKTTMAAAATCLVALLVVVLAEA. Asn-157 carries N-linked (GlcNAc...) asparagine glycosylation. Residue Glu-187 is the Proton donor of the active site. Residues Asn-198 and Asn-249 are each glycosylated (N-linked (GlcNAc...) asparagine). Glu-259 (nucleophile) is an active-site residue. Residues Asn-260, Asn-362, Asn-366, Asn-392, Asn-502, Asn-578, Asn-586, and Asn-615 are each glycosylated (N-linked (GlcNAc...) asparagine). Positions 746–828 constitute an SUEL-type lectin domain; it reads AEVGDAITLS…SGVLTVQASC (83 aa).

It belongs to the glycosyl hydrolase 35 family.

The protein localises to the secreted. The protein resides in the extracellular space. It localises to the apoplast. It catalyses the reaction Hydrolysis of terminal non-reducing beta-D-galactose residues in beta-D-galactosides.. This is Beta-galactosidase 13 from Oryza sativa subsp. japonica (Rice).